A 2103-amino-acid chain; its full sequence is uncharacterized protein (2103 aa).

Residues Met1–Pro12 show a composition bias toward low complexity. Residues Met1–Glu61 form a disordered region. Positions Glu51–Glu61 are enriched in acidic residues. A Bromo domain is found at Tyr77 to Leu196. Disordered regions lie at residues Ala730 to Lys750, Asn853 to Ser881, Gln933 to Ser956, Ser1224 to Gly1244, and Gly1770 to Pro1817. Over residues Asp865–Lys877 the composition is skewed to basic and acidic residues. Residues Ser1224 to Gln1234 show a composition bias toward polar residues. Residues Pro1235–Gly1244 show a composition bias toward low complexity. Positions Arg1773 to Ser1794 are enriched in polar residues. Positions Thr1795–Thr1808 are enriched in low complexity.

It is found in the nucleus. This is an uncharacterized protein from Homo sapiens (Human).